A 39-amino-acid chain; its full sequence is Photosystem II reaction center protein L (39 aa).

Residues 18–38 (SLYLGLLLVFVTGVLFSSYFF) form a helical membrane-spanning segment.

Belongs to the PsbL family. In terms of assembly, PSII is composed of 1 copy each of membrane proteins PsbA, PsbB, PsbC, PsbD, PsbE, PsbF, PsbH, PsbI, PsbJ, PsbK, PsbL, PsbM, PsbT, PsbX, PsbY, PsbZ, Psb30/Ycf12, at least 3 peripheral proteins of the oxygen-evolving complex and a large number of cofactors. It forms dimeric complexes.

It is found in the plastid. The protein resides in the organellar chromatophore thylakoid membrane. Its function is as follows. One of the components of the core complex of photosystem II (PSII). PSII is a light-driven water:plastoquinone oxidoreductase that uses light energy to abstract electrons from H(2)O, generating O(2) and a proton gradient subsequently used for ATP formation. It consists of a core antenna complex that captures photons, and an electron transfer chain that converts photonic excitation into a charge separation. This subunit is found at the monomer-monomer interface and is required for correct PSII assembly and/or dimerization. The chain is Photosystem II reaction center protein L from Paulinella chromatophora.